The following is a 480-amino-acid chain: Lysosomal protective protein (480 aa).

The signal sequence occupies residues 1-28 (MIRAAPPPLFLLLLLLLLLVSWASRGEA). 4 cysteine pairs are disulfide-bonded: Cys88/Cys362, Cys240/Cys256, Cys241/Cys246, and Cys281/Cys331. Asn145 is a glycosylation site (N-linked (GlcNAc...) asparagine). The active site involves Ser178. An N-linked (GlcNAc...) asparagine glycan is attached at Asn333. Catalysis depends on residues Asp400 and His457.

This sequence belongs to the peptidase S10 family. In terms of assembly, heterodimer of a 32 kDa chain and a 20 kDa chain; disulfide-linked.

The protein localises to the lysosome. It carries out the reaction Release of a C-terminal amino acid with broad specificity.. Functionally, protective protein appears to be essential for both the activity of beta-galactosidase and neuraminidase, it associates with these enzymes and exerts a protective function necessary for their stability and activity. This protein is also a carboxypeptidase and can deamidate tachykinins. The chain is Lysosomal protective protein (CTSA) from Homo sapiens (Human).